The chain runs to 539 residues: CTP synthase (539 aa).

The interval 1–272 (MTLRSKMTKY…AQIILSHFKI (272 aa)) is amidoligase domain. Ser-19 contributes to the CTP binding site. Ser-19 contributes to the UTP binding site. 20-25 (GLGKGV) provides a ligand contact to ATP. Tyr-60 contributes to the L-glutamine binding site. Asp-77 is an ATP binding site. The Mg(2+) site is built by Asp-77 and Glu-147. CTP is bound by residues 154–156 (DIE), 193–198 (KSKPTQ), and Lys-229. UTP is bound by residues 193–198 (KSKPTQ) and Lys-229. The Glutamine amidotransferase type-1 domain maps to 298 to 539 (KILMVGKYVE…SFLRVLIKNN (242 aa)). Position 360 (Gly-360) interacts with L-glutamine. Catalysis depends on Cys-387, which acts as the Nucleophile; for glutamine hydrolysis. Residues 388–391 (LGFQ), Glu-410, and Arg-469 contribute to the L-glutamine site. Active-site residues include His-514 and Glu-516.

The protein belongs to the CTP synthase family. Homotetramer.

The enzyme catalyses UTP + L-glutamine + ATP + H2O = CTP + L-glutamate + ADP + phosphate + 2 H(+). The catalysed reaction is L-glutamine + H2O = L-glutamate + NH4(+). It catalyses the reaction UTP + NH4(+) + ATP = CTP + ADP + phosphate + 2 H(+). Its pathway is pyrimidine metabolism; CTP biosynthesis via de novo pathway; CTP from UDP: step 2/2. Its activity is regulated as follows. Allosterically activated by GTP, when glutamine is the substrate; GTP has no effect on the reaction when ammonia is the substrate. The allosteric effector GTP functions by stabilizing the protein conformation that binds the tetrahedral intermediate(s) formed during glutamine hydrolysis. Inhibited by the product CTP, via allosteric rather than competitive inhibition. In terms of biological role, catalyzes the ATP-dependent amination of UTP to CTP with either L-glutamine or ammonia as the source of nitrogen. Regulates intracellular CTP levels through interactions with the four ribonucleotide triphosphates. The protein is CTP synthase of Mycoplasmopsis pulmonis (strain UAB CTIP) (Mycoplasma pulmonis).